A 192-amino-acid chain; its full sequence is MAP6 domain-containing protein 1 (192 aa).

Residues Cys-5, Cys-10, and Cys-11 are each lipidated (S-palmitoyl cysteine). A disordered region spans residues 36–106 (LESEEPIPGG…RTKPSATPGR (71 aa)). Ser-38 is subject to Phosphoserine. The span at 43–58 (PGGVPSRRGPSPAGSR) shows a compositional bias: low complexity. Mn regions lie at residues 123–136 (TTSY…WTGV) and 158–170 (DGSP…APEV). Ser-160 is modified (phosphoserine).

The protein belongs to the STOP family. As to quaternary structure, interacts with calmodulin. Post-translationally, palmitoylated. Palmitoylation enhances association with microtubules.

It is found in the golgi apparatus. Its subcellular location is the cytoplasm. It localises to the cytoskeleton. Its function is as follows. May have microtubule-stabilizing activity. This chain is MAP6 domain-containing protein 1 (MAP6D1), found in Bos taurus (Bovine).